The primary structure comprises 122 residues: Large ribosomal subunit protein uL14 (122 aa).

Belongs to the universal ribosomal protein uL14 family. In terms of assembly, part of the 50S ribosomal subunit. Forms a cluster with proteins L3 and L19. In the 70S ribosome, L14 and L19 interact and together make contacts with the 16S rRNA in bridges B5 and B8.

Functionally, binds to 23S rRNA. Forms part of two intersubunit bridges in the 70S ribosome. This is Large ribosomal subunit protein uL14 from Desulfovibrio desulfuricans (strain ATCC 27774 / DSM 6949 / MB).